The primary structure comprises 1399 residues: Meiosis-specific protein ASY2 (1399 aa).

Residues 10-248 (QQSLILTTEL…SQHHVLTVKV (239 aa)) form the HORMA domain. Residues 257–266 (PCEDENDNMQ) are compositionally biased toward acidic residues. Disordered regions lie at residues 257 to 281 (PCED…HDDQ), 487 to 525 (SKPK…SSEP), 617 to 656 (RLTG…AAPE), 940 to 974 (PPPP…VDQV), and 1045 to 1090 (DQDK…AAPK). Positions 267–281 (DDERSKGPDSLHDDQ) are enriched in basic and acidic residues. Positions 509–523 (SAPPSSEPKSAPPSS) are enriched in pro residues. Positions 617–631 (RLTGNPSNEAQSSRS) are enriched in polar residues. Residues 1205–1246 (MASLRDAAEIHKAEMSSLNDEVKRLNSREADLQKEFSDLQVA) adopt a coiled-coil conformation.

It localises to the chromosome. It is found in the nucleus. Functionally, required for normal meiosis. The sequence is that of Meiosis-specific protein ASY2 from Arabidopsis thaliana (Mouse-ear cress).